The following is a 738-amino-acid chain: Protostadienol synthase A (738 aa).

A PFTB 1 repeat occupies 132–173 (KQEMCRYLLNVVNEDGGWGLFIQSPSTVFGTVMNYCMLRILG). Aspartate 463 acts as the Proton donor in catalysis. 3 PFTB repeats span residues 490 to 531 (LQQA…YENV), 567 to 607 (VSRS…ACMG), and 616 to 663 (CQRA…AVIG).

This sequence belongs to the terpene cyclase/mutase family.

It catalyses the reaction (S)-2,3-epoxysqualene = (17Z)-protosta-17(20),24-dien-3beta-ol. Protostadienol synthase which cyclizes (3S)-oxidosqualene to (17Z)-protosta-17(20),24-dien-3-beta-ol (protostadienol), the biosynthetic precursor of helvolic acid, a secondary metabolite which promotes virulence. The chain is Protostadienol synthase A (pdsA) from Neosartorya fischeri (strain ATCC 1020 / DSM 3700 / CBS 544.65 / FGSC A1164 / JCM 1740 / NRRL 181 / WB 181) (Aspergillus fischerianus).